The following is a 484-amino-acid chain: Replication factor C large subunit (484 aa).

ATP is bound at residue 46–53 (GPPGSGKT). Basic and acidic residues predominate over residues 463-478 (NADTKEKEKKDPKKQA). The interval 463–484 (NADTKEKEKKDPKKQATLDSFF) is disordered.

It belongs to the activator 1 small subunits family. RfcL subfamily. In terms of assembly, heteromultimer composed of small subunits (RfcS) and large subunits (RfcL).

Part of the RFC clamp loader complex which loads the PCNA sliding clamp onto DNA. This is Replication factor C large subunit from Methanococcus maripaludis (strain C6 / ATCC BAA-1332).